Reading from the N-terminus, the 338-residue chain is Porphobilinogen deaminase (338 aa).

Cys-265 is modified (S-(dipyrrolylmethanemethyl)cysteine).

The protein belongs to the HMBS family. It depends on dipyrromethane as a cofactor.

The enzyme catalyses 4 porphobilinogen + H2O = hydroxymethylbilane + 4 NH4(+). Its pathway is porphyrin-containing compound metabolism; protoporphyrin-IX biosynthesis; coproporphyrinogen-III from 5-aminolevulinate: step 2/4. Tetrapolymerization of the monopyrrole PBG into the hydroxymethylbilane pre-uroporphyrinogen in several discrete steps. The chain is Porphobilinogen deaminase (HEM3) from Yarrowia lipolytica (strain CLIB 122 / E 150) (Yeast).